The primary structure comprises 239 residues: MMEWRDEGALLSVRRHGESSAIIEVFTAAHGRHAGVVRGGASRKIAPILQPGAQLDLTWKARLDEHMGAFTVEPLRSRTALLGDRLGLAGLNAICAMLHVTLPEREPHSTLWQESMALLDALDRPGWPPAYLRWEMRLLEETGFGLDLTRCAVTGSREDLAFVSPKTGRAVSRGAAGGWADRLFPLPLALLGQGPASAEEVRQGLAITGHFLGRELAPLLNGRPLPEARARLMELLARA.

Belongs to the RecO family.

In terms of biological role, involved in DNA repair and RecF pathway recombination. This chain is DNA repair protein RecO, found in Cereibacter sphaeroides (strain ATCC 17029 / ATH 2.4.9) (Rhodobacter sphaeroides).